We begin with the raw amino-acid sequence, 699 residues long: Receptor-type tyrosine-protein phosphatase epsilon (699 aa).

The N-terminal stretch at 1–19 (MEPFCPLLLASFSLSLARA) is a signal peptide. The segment covering 20 to 36 (GQGNDTTPTESNWTSTT) has biased composition (low complexity). The tract at residues 20 to 40 (GQGNDTTPTESNWTSTTAGPP) is disordered. Over 20–45 (GQGNDTTPTESNWTSTTAGPPDPGAS) the chain is Extracellular. 2 N-linked (GlcNAc...) asparagine glycosylation sites follow: Asn23 and Asn31. A helical membrane pass occupies residues 46–68 (QPLLTWLLLPLLLLLFLLAAYFF). The Cytoplasmic segment spans residues 69 to 699 (RFRKQRKAVV…DIFSDYANFK (631 aa)). 2 Tyrosine-protein phosphatase domains span residues 134-393 (FREE…LLEY) and 425-688 (LEEE…VQDF). Residues Asp302, 334 to 340 (CSAGVGR), and Gln378 contribute to the substrate site. Cys334 acts as the Phosphocysteine intermediate in catalysis. Cys629 acts as the Phosphocysteine intermediate in catalysis. Tyr695 carries the phosphotyrosine modification.

It belongs to the protein-tyrosine phosphatase family. Receptor class 4 subfamily. In terms of assembly, monomer. Isoform 2: Homodimer. Can form oligomers. Dimerization is increased by oxidative stress and decreased by EGFR. Isoform 2 interacts with GRB2. Post-translationally, a catalytically active cytoplasmic form (p65) is produced by proteolytic cleavage of either isoform 1, isoform 2 or isoform 3. In terms of processing, phosphorylated on tyrosine residues by tyrosine kinase Neu. Glycosylated. Isoform 2 is expressed in the spleen and thymus (at protein level). Detected in fibroblasts, myeloid cells, macrophages, and T-cells but not in B-cell lines. Isoform 1 and isoform 2 are expressed predominantly in the brain, testes, and lungs, with lower levels present in lymph nodes, thymus, spleen, heart and mammary glands. Isoform 1 is expressed in osteoclasts and not in osteoblasts and its expression is related to osteoclast differentiation. It is also expressed in the erythrocytes. Isoform 2 is strongly expressed in skeletal muscle and L6 skeletal muscle cell line.

Its subcellular location is the cell membrane. It is found in the cytoplasm. The catalysed reaction is O-phospho-L-tyrosyl-[protein] + H2O = L-tyrosyl-[protein] + phosphate. Its activity is regulated as follows. Inhibited by alendronate (ALN), orthovanadate, and phenylarsine oxide (PAO). Acts as a negative regulator of insulin receptor (IR) signaling and is involved in insulin-induced glucose metabolism mainly through direct dephosphorylation and inactivation of IR in hepatocytes and liver. Plays a critical role in signaling transduction pathways and phosphoprotein network topology in red blood cells. May play a role in osteoclast formation and function. In terms of biological role, acts as a negative regulator of insulin receptor (IR) signaling in skeletal muscle. Regulates insulin-induced tyrosine phosphorylation of insulin receptor (IR) and insulin receptor substrate 1 (IRS-1), phosphorylation of protein kinase B and glycogen synthase kinase-3 and insulin induced stimulation of glucose uptake. Its function is as follows. Isoform 1 and isoform 2 act as a negative regulator of FceRI-mediated signal transduction leading to cytokine production and degranulation, most likely by acting at the level of SYK to affect downstream events such as phosphorylation of SLP76 and LAT and mobilization of Ca(2+). This Mus musculus (Mouse) protein is Receptor-type tyrosine-protein phosphatase epsilon (Ptpre).